The chain runs to 272 residues: 1,4-dihydroxy-2-naphthoyl-CoA synthase (272 aa).

Substrate-binding positions include R33, 72 to 76 (SGGDQ), Y84, 116 to 120 (YAIGG), T142, S148, Y245, and K260. Position 141–143 (141–143 (QTG)) interacts with hydrogencarbonate. Residues 253-264 (GRDAFKEKRDPD) show a composition bias toward basic and acidic residues. Residues 253–272 (GRDAFKEKRDPDFDQFPKFP) are disordered.

This sequence belongs to the enoyl-CoA hydratase/isomerase family. MenB subfamily. Hydrogencarbonate serves as cofactor.

It catalyses the reaction 2-succinylbenzoyl-CoA + H(+) = 1,4-dihydroxy-2-naphthoyl-CoA + H2O. Its pathway is quinol/quinone metabolism; 1,4-dihydroxy-2-naphthoate biosynthesis; 1,4-dihydroxy-2-naphthoate from chorismate: step 6/7. It functions in the pathway quinol/quinone metabolism; menaquinone biosynthesis. Functionally, converts o-succinylbenzoyl-CoA (OSB-CoA) to 1,4-dihydroxy-2-naphthoyl-CoA (DHNA-CoA). This chain is 1,4-dihydroxy-2-naphthoyl-CoA synthase, found in Staphylococcus saprophyticus subsp. saprophyticus (strain ATCC 15305 / DSM 20229 / NCIMB 8711 / NCTC 7292 / S-41).